We begin with the raw amino-acid sequence, 241 residues long: MSLLSAIDTSAASVYQPAQLLNWVYLSLQDTHQASAFDAFRPEPTAGAAPPELAFGKGRPEQLGSPLHSSYLNSFFQLQRGEALSNSVYKGASPYGSLNNIADGLSSLTEHFSDLTLTSEARKPSKRPPPNYLCHLCFNKGHYIKDCPQARPKGEGLTPYQGKKRCFGEYKCPKCKRKWMSGNSWANMGQECIKCHINVYPHKQRPLEKPDGLDVSDQSKEHPQHLCEECKVLGYYCRRVQ.

Phosphoserine is present on residues Ser-65 and Ser-93. The segment at 132 to 149 (YLCHLCFNKGHYIKDCPQ) adopts a CCHC-type zinc-finger fold.

This is Zinc finger CCHC domain-containing protein 24 (ZCCHC24) from Macaca fascicularis (Crab-eating macaque).